The following is a 257-amino-acid chain: Reticulon-like protein B4 (257 aa).

The disordered stretch occupies residues 19-42 (IHGHGDSSSLSDSDDDKKSTSSSS). Residues 68–257 (PADIFLWRNK…PRGALNKKKD (190 aa)) form the Reticulon domain. The next 3 helical transmembrane spans lie at 78–98 (KVSG…ELFE), 99–119 (YHLL…LFLW), and 173–193 (FILV…YNFL).

Interacts with VirB2.

It is found in the endoplasmic reticulum membrane. Its function is as follows. Plays a role in the Agrobacterium-mediated plant transformation via its interaction with VirB2, the major component of the T-pilus. This chain is Reticulon-like protein B4 (RTNLB4), found in Arabidopsis thaliana (Mouse-ear cress).